Reading from the N-terminus, the 87-residue chain is HssA/B-like protein 8 (87 aa).

Positions 1–22 (MSILSALTSISNPMKSTKSSVA) are enriched in polar residues. Residues 1 to 24 (MSILSALTSISNPMKSTKSSVANG) form a disordered region.

Belongs to the hssA/B family.

This Dictyostelium discoideum (Social amoeba) protein is HssA/B-like protein 8 (hssl8).